The primary structure comprises 593 residues: MASAVVDSGGSALELPSDGGENQEGGDTGPDCPAVIVEPVPSARLEQGYAAQVLVYDDETYMMQDVAEEQEVETENSETVEASVHSSNAHCTDKTIEAAEALLHMESPTCLRDSRSPVEVFVPPCISTPEFIHAAMRPDVITETVVEVSTEESEPMDASPIPTSPDSHEPMKKKKVGRKPKTQQSPVSNGSPELGIKKKAREGKGNTTYLWEFLLDLLQDKNTCPRYIKWTQREKGIFKLVDSKAVSKLWGKHKNKPDMNYETMGRALRYYYQRGILAKVEGQRLVYQFKDMPKNIVVIDDDKSETCPEDLAAAADDKSLERVSLSAESLLKAATAVRGGKNSSPLNCSRAEKGVARVVNITSPTHDGSSRSPTTTAPVSAAAAPRTVRVAMQVPVVMTSLGQKISAVAVQSVNAGTGSPLITSTSPASASSPKVVIQTVPTVMPASTENGDRITMQPAKIITIPATQLAQCQLQAKSNLTGSGSINIVGTPLAVRALTPVSIAHGTPVMRLSVPAQQASGQTPPRVISALLKGPEGKSEAKKQEHDVKTLQLVEEKGADGNKTVTHVVVVSAPSAIALPVTMKTEGLVTCEK.

The disordered stretch occupies residues 1–34 (MASAVVDSGGSALELPSDGGENQEGGDTGPDCPA). Ser-107 carries the post-translational modification Phosphoserine. Positions 146 to 199 (VEVSTEESEPMDASPIPTSPDSHEPMKKKKVGRKPKTQQSPVSNGSPELGIKKK) are disordered. A compositionally biased stretch (basic residues) spans 171–181 (MKKKKVGRKPK). Thr-182 is modified (phosphothreonine). Positions 182–191 (TQQSPVSNGS) are enriched in polar residues. Ser-185 and Ser-191 each carry phosphoserine. Positions 208–290 (TYLWEFLLDL…EGQRLVYQFK (83 aa)) form a DNA-binding region, ETS. The interval 362–383 (TSPTHDGSSRSPTTTAPVSAAA) is disordered. Phosphoserine occurs at positions 363 and 372. Residues 370-383 (SRSPTTTAPVSAAA) show a composition bias toward low complexity. The residue at position 376 (Thr-376) is a Phosphothreonine. Ser-432 carries the post-translational modification Phosphoserine. Residue Arg-496 is modified to Omega-N-methylarginine. Thr-523 carries the phosphothreonine modification. Residue Lys-538 forms a Glycyl lysine isopeptide (Lys-Gly) (interchain with G-Cter in SUMO2) linkage.

It belongs to the ETS family. Interacts with LIM domains of LMO2. Interacts via its N-terminal region with RUNX1. In terms of tissue distribution, expressed in all tissues examined. Highest levels in thymocytes and bone marrow.

The protein resides in the nucleus. In terms of biological role, probably transcriptionally activates the LYN and BLK promoters and acts synergistically with RUNX1 to transactivate the BLK promoter. The chain is ETS-related transcription factor Elf-2 from Mus musculus (Mouse).